Reading from the N-terminus, the 141-residue chain is Nucleoside diphosphate kinase (141 aa).

Residues lysine 11, phenylalanine 59, arginine 87, threonine 93, arginine 104, and asparagine 114 each coordinate ATP. Catalysis depends on histidine 117, which acts as the Pros-phosphohistidine intermediate.

Belongs to the NDK family. As to quaternary structure, homotetramer. Mg(2+) is required as a cofactor.

Its subcellular location is the cytoplasm. The catalysed reaction is a 2'-deoxyribonucleoside 5'-diphosphate + ATP = a 2'-deoxyribonucleoside 5'-triphosphate + ADP. It catalyses the reaction a ribonucleoside 5'-diphosphate + ATP = a ribonucleoside 5'-triphosphate + ADP. Its function is as follows. Major role in the synthesis of nucleoside triphosphates other than ATP. The ATP gamma phosphate is transferred to the NDP beta phosphate via a ping-pong mechanism, using a phosphorylated active-site intermediate. This chain is Nucleoside diphosphate kinase, found in Polaromonas sp. (strain JS666 / ATCC BAA-500).